The chain runs to 316 residues: Beta-ketoacyl-[acyl-carrier-protein] synthase III (316 aa).

Catalysis depends on residues Cys-112 and His-243. The tract at residues 244–248 is ACP-binding; it reads QANLR. Residue Asn-273 is part of the active site.

This sequence belongs to the thiolase-like superfamily. FabH family. As to quaternary structure, homodimer.

It is found in the cytoplasm. The enzyme catalyses malonyl-[ACP] + acetyl-CoA + H(+) = 3-oxobutanoyl-[ACP] + CO2 + CoA. The protein operates within lipid metabolism; fatty acid biosynthesis. Catalyzes the condensation reaction of fatty acid synthesis by the addition to an acyl acceptor of two carbons from malonyl-ACP. Catalyzes the first condensation reaction which initiates fatty acid synthesis and may therefore play a role in governing the total rate of fatty acid production. Possesses both acetoacetyl-ACP synthase and acetyl transacylase activities. Its substrate specificity determines the biosynthesis of branched-chain and/or straight-chain of fatty acids. The polypeptide is Beta-ketoacyl-[acyl-carrier-protein] synthase III (Yersinia pseudotuberculosis serotype O:1b (strain IP 31758)).